The sequence spans 989 residues: Translation initiation factor IF-2 (989 aa).

Disordered stretches follow at residues K43–R219 and E234–R379. Over residues N72–N87 the composition is skewed to polar residues. A compositionally biased stretch (low complexity) spans P105–A146. Positions V149–E159 are enriched in basic and acidic residues. The span at K160–S171 shows a compositional bias: polar residues. The span at E234–K293 shows a compositional bias: basic and acidic residues. Positions A294 to A303 are enriched in low complexity. Residues P342 to Q361 are compositionally biased toward basic and acidic residues. The region spanning S489 to K659 is the tr-type G domain. The segment at G498–T505 is G1. G498–T505 is a binding site for GTP. Positions G523–H527 are G2. The segment at D545 to G548 is G3. GTP contacts are provided by residues D545 to H549 and N599 to D602. Positions N599 to D602 are G4. The segment at S635–A637 is G5.

The protein belongs to the TRAFAC class translation factor GTPase superfamily. Classic translation factor GTPase family. IF-2 subfamily.

Its subcellular location is the cytoplasm. In terms of biological role, one of the essential components for the initiation of protein synthesis. Protects formylmethionyl-tRNA from spontaneous hydrolysis and promotes its binding to the 30S ribosomal subunits. Also involved in the hydrolysis of GTP during the formation of the 70S ribosomal complex. This chain is Translation initiation factor IF-2, found in Zymomonas mobilis subsp. mobilis (strain ATCC 31821 / ZM4 / CP4).